Reading from the N-terminus, the 215-residue chain is Thiamine-phosphate synthase (215 aa).

4-amino-2-methyl-5-(diphosphooxymethyl)pyrimidine-binding positions include 40-44 (QLRIK) and Asn72. Mg(2+) is bound by residues Asp73 and Asp92. Ser111 is a 4-amino-2-methyl-5-(diphosphooxymethyl)pyrimidine binding site. 137-139 (TTT) serves as a coordination point for 2-[(2R,5Z)-2-carboxy-4-methylthiazol-5(2H)-ylidene]ethyl phosphate. Position 140 (Lys140) interacts with 4-amino-2-methyl-5-(diphosphooxymethyl)pyrimidine. 2-[(2R,5Z)-2-carboxy-4-methylthiazol-5(2H)-ylidene]ethyl phosphate is bound by residues Gly169 and 189-190 (VS).

This sequence belongs to the thiamine-phosphate synthase family. It depends on Mg(2+) as a cofactor.

The catalysed reaction is 2-[(2R,5Z)-2-carboxy-4-methylthiazol-5(2H)-ylidene]ethyl phosphate + 4-amino-2-methyl-5-(diphosphooxymethyl)pyrimidine + 2 H(+) = thiamine phosphate + CO2 + diphosphate. It carries out the reaction 2-(2-carboxy-4-methylthiazol-5-yl)ethyl phosphate + 4-amino-2-methyl-5-(diphosphooxymethyl)pyrimidine + 2 H(+) = thiamine phosphate + CO2 + diphosphate. The enzyme catalyses 4-methyl-5-(2-phosphooxyethyl)-thiazole + 4-amino-2-methyl-5-(diphosphooxymethyl)pyrimidine + H(+) = thiamine phosphate + diphosphate. Its pathway is cofactor biosynthesis; thiamine diphosphate biosynthesis; thiamine phosphate from 4-amino-2-methyl-5-diphosphomethylpyrimidine and 4-methyl-5-(2-phosphoethyl)-thiazole: step 1/1. Condenses 4-methyl-5-(beta-hydroxyethyl)thiazole monophosphate (THZ-P) and 2-methyl-4-amino-5-hydroxymethyl pyrimidine pyrophosphate (HMP-PP) to form thiamine monophosphate (TMP). The polypeptide is Thiamine-phosphate synthase (Proteus mirabilis (strain HI4320)).